Here is a 365-residue protein sequence, read N- to C-terminus: uncharacterized protein (365 aa).

Disordered regions lie at residues 119 to 157 (ERSRRLPTAPTSLSGQHRSLRLASKPEREVPLGAGQQES), 216 to 298 (RPPG…DISH), and 313 to 365 (SHHH…LSVG). Residues 326–340 (SDPRIESRDLPERPQ) are compositionally biased toward basic and acidic residues.

This is an uncharacterized protein from Homo sapiens (Human).